Reading from the N-terminus, the 319-residue chain is Ribonuclease Z (319 aa).

7 residues coordinate Zn(2+): H62, H64, D66, H67, H145, D215, and H273. D66 acts as the Proton acceptor in catalysis.

This sequence belongs to the RNase Z family. Homodimer. The cofactor is Zn(2+).

The catalysed reaction is Endonucleolytic cleavage of RNA, removing extra 3' nucleotides from tRNA precursor, generating 3' termini of tRNAs. A 3'-hydroxy group is left at the tRNA terminus and a 5'-phosphoryl group is left at the trailer molecule.. Its function is as follows. Zinc phosphodiesterase, which displays some tRNA 3'-processing endonuclease activity. Probably involved in tRNA maturation, by removing a 3'-trailer from precursor tRNA. The polypeptide is Ribonuclease Z (Borreliella afzelii (strain PKo) (Borrelia afzelii)).